The following is a 240-amino-acid chain: Adenosine 5'-phosphosulfate reductase (240 aa).

Cys-125, Cys-126, Cys-208, and Cys-211 together coordinate [4Fe-4S] cluster. Catalysis depends on Cys-234, which acts as the Nucleophile; cysteine thiosulfonate intermediate.

The protein belongs to the PAPS reductase family. CysH subfamily. It depends on [4Fe-4S] cluster as a cofactor.

Its subcellular location is the cytoplasm. The catalysed reaction is [thioredoxin]-disulfide + sulfite + AMP + 2 H(+) = adenosine 5'-phosphosulfate + [thioredoxin]-dithiol. It functions in the pathway sulfur metabolism; hydrogen sulfide biosynthesis; sulfite from sulfate. Catalyzes the formation of sulfite from adenosine 5'-phosphosulfate (APS) using thioredoxin as an electron donor. This Oceanobacillus iheyensis (strain DSM 14371 / CIP 107618 / JCM 11309 / KCTC 3954 / HTE831) protein is Adenosine 5'-phosphosulfate reductase.